We begin with the raw amino-acid sequence, 68 residues long: Beta-toxin Im-2 (68 aa).

The 67-residue stretch at 1-67 (KDGYPMVRAG…VWTYEKNTCK (67 aa)) folds into the LCN-type CS-alpha/beta domain. 4 cysteine pairs are disulfide-bonded: Cys-15/Cys-66, Cys-19/Cys-40, Cys-26/Cys-47, and Cys-30/Cys-49.

Belongs to the long (4 C-C) scorpion toxin superfamily. Sodium channel inhibitor family. Beta subfamily. In terms of tissue distribution, expressed by the venom gland.

The protein localises to the secreted. Functionally, beta toxins bind voltage-independently at site-4 of sodium channels (Nav) and shift the voltage of activation toward more negative potentials thereby affecting sodium channel activation and promoting spontaneous and repetitive firing. Is toxic to both insect and mammals. Induces paralysis in Acheta domestica crickets, but does not induce death, whereas intracerebroventricular injection into mice causes immediate death (at a dose of 0.05 ug/g). The sequence is that of Beta-toxin Im-2 from Isometrus maculatus (Lesser brown scorpion).